Consider the following 155-residue polypeptide: MSKKIIQVVLKENIQKLGKSNDVVKVATGYARNFLIPNKMASVATVGMLNQQKLYAAIKEKKIIFAKENARKTQQLLEEIQKFSISKKTGDGETIFGSVTEKEISQIIKNTTNVDIDKQNILIPEIKTIGLYNIEIKLFNQVTANIQLQVLPESN.

It belongs to the bacterial ribosomal protein bL9 family.

The protein localises to the plastid. It is found in the chloroplast. Functionally, binds to the 23S rRNA. This chain is Large ribosomal subunit protein bL9c, found in Porphyra purpurea (Red seaweed).